We begin with the raw amino-acid sequence, 68 residues long: VTCSPVQLSPCLGPINSGAPSPTTCCQKLREQRPCLCGYLKNPSLRQYVNSPNARKLASNCGVPVPQC.

The protein belongs to the plant LTP family.

Its function is as follows. Plant non-specific lipid-transfer proteins transfer phospholipids as well as galactolipids across membranes. May play a role in wax or cutin deposition in the cell walls of expanding epidermal cells and certain secretory tissues. The polypeptide is Non-specific lipid-transfer protein 2 (Prunus armeniaca (Apricot)).